A 222-amino-acid chain; its full sequence is Uracil-DNA glycosylase (222 aa).

Catalysis depends on Asp61, which acts as the Proton acceptor.

It belongs to the uracil-DNA glycosylase (UDG) superfamily. UNG family.

It localises to the cytoplasm. The catalysed reaction is Hydrolyzes single-stranded DNA or mismatched double-stranded DNA and polynucleotides, releasing free uracil.. Its function is as follows. Excises uracil residues from the DNA which can arise as a result of misincorporation of dUMP residues by DNA polymerase or due to deamination of cytosine. This chain is Uracil-DNA glycosylase, found in Aeromonas salmonicida (strain A449).